The sequence spans 467 residues: UDP-N-acetylmuramoylalanine--D-glutamate ligase (467 aa).

118-124 (GTNGKTT) is an ATP binding site.

This sequence belongs to the MurCDEF family.

The protein resides in the cytoplasm. The enzyme catalyses UDP-N-acetyl-alpha-D-muramoyl-L-alanine + D-glutamate + ATP = UDP-N-acetyl-alpha-D-muramoyl-L-alanyl-D-glutamate + ADP + phosphate + H(+). It functions in the pathway cell wall biogenesis; peptidoglycan biosynthesis. Cell wall formation. Catalyzes the addition of glutamate to the nucleotide precursor UDP-N-acetylmuramoyl-L-alanine (UMA). This Streptomyces avermitilis (strain ATCC 31267 / DSM 46492 / JCM 5070 / NBRC 14893 / NCIMB 12804 / NRRL 8165 / MA-4680) protein is UDP-N-acetylmuramoylalanine--D-glutamate ligase.